A 474-amino-acid chain; its full sequence is Amidophosphoribosyltransferase (474 aa).

A propeptide spanning residues 1–10 is cleaved from the precursor; the sequence is MLGESEVRDK. Residue cysteine 11 is the Nucleophile of the active site. The Glutamine amidotransferase type-2 domain occupies 11–234; the sequence is CGIVGIYSQD…PGEILHLNRG (224 aa). A [4Fe-4S] cluster-binding site is contributed by cysteine 250. Residues serine 297, aspartate 359, and aspartate 360 each coordinate Mg(2+). [4Fe-4S] cluster-binding residues include cysteine 396, cysteine 447, and cysteine 450.

It in the C-terminal section; belongs to the purine/pyrimidine phosphoribosyltransferase family. It depends on Mg(2+) as a cofactor. [4Fe-4S] cluster is required as a cofactor.

The enzyme catalyses 5-phospho-beta-D-ribosylamine + L-glutamate + diphosphate = 5-phospho-alpha-D-ribose 1-diphosphate + L-glutamine + H2O. The protein operates within purine metabolism; IMP biosynthesis via de novo pathway; N(1)-(5-phospho-D-ribosyl)glycinamide from 5-phospho-alpha-D-ribose 1-diphosphate: step 1/2. Catalyzes the formation of phosphoribosylamine from phosphoribosylpyrophosphate (PRPP) and glutamine. The chain is Amidophosphoribosyltransferase from Methanothermobacter thermautotrophicus (strain ATCC 29096 / DSM 1053 / JCM 10044 / NBRC 100330 / Delta H) (Methanobacterium thermoautotrophicum).